A 101-amino-acid chain; its full sequence is uncharacterized protein (101 aa).

A compositionally biased stretch (basic and acidic residues) spans 1–11; sequence MSDEGYRELVE. Residues 1–26 form a disordered region; it reads MSDEGYRELVESKSAPTTPGPWSPDR.

This is an uncharacterized protein from Torque teno canis virus (isolate Cf-TTV10).